A 285-amino-acid chain; its full sequence is MMKACGFDIGLDHPFFLIAGPCVIESRELAFETAGRLKEITGKLGVSFIYKSSFDKANRSSGKSFRGPGMDEGLKILADVRAQLDVPVLTDVHDIDQVAPVAAVVDMLQTPAFLCRQTDFIRACAATLKPVNIKKGQFLAPHDMLQVARKARDAALEAGGDGNNILVCERGASFGYNNLVSDMRSLAIMRETDCPVVFDATHSVQLPGGQGASSGGQREFVPVLARAAVAVGVAGLFMETHPNPACAMSDGPNAVPLDRMAELLESLVALDRVTKRSGFLENQFV.

The protein belongs to the KdsA family.

It is found in the cytoplasm. The catalysed reaction is D-arabinose 5-phosphate + phosphoenolpyruvate + H2O = 3-deoxy-alpha-D-manno-2-octulosonate-8-phosphate + phosphate. Its pathway is carbohydrate biosynthesis; 3-deoxy-D-manno-octulosonate biosynthesis; 3-deoxy-D-manno-octulosonate from D-ribulose 5-phosphate: step 2/3. The protein operates within bacterial outer membrane biogenesis; lipopolysaccharide biosynthesis. This Bordetella bronchiseptica (strain ATCC BAA-588 / NCTC 13252 / RB50) (Alcaligenes bronchisepticus) protein is 2-dehydro-3-deoxyphosphooctonate aldolase.